The primary structure comprises 270 residues: tRNA pseudouridine synthase A (270 aa).

The Nucleophile role is filled by D60. An RNA binding region spans residues 107–111; that stretch reads FHARF. Y118 contributes to the substrate binding site. An interaction with tRNA region spans residues 168 to 172; it reads QCQSR.

Belongs to the tRNA pseudouridine synthase TruA family. Homodimer.

The enzyme catalyses uridine(38/39/40) in tRNA = pseudouridine(38/39/40) in tRNA. In terms of biological role, formation of pseudouridine at positions 38, 39 and 40 in the anticodon stem and loop of transfer RNAs. In Citrobacter koseri (strain ATCC BAA-895 / CDC 4225-83 / SGSC4696), this protein is tRNA pseudouridine synthase A.